The primary structure comprises 320 residues: Protease HtpX homolog (320 aa).

Transmembrane regions (helical) follow at residues 6-26 and 28-48; these read TAMLLAFMTALFMFVGFLIGG and AGMMIAFVIAAGMNFFSYWNS. A Zn(2+)-binding site is contributed by His-130. Glu-131 is an active-site residue. A Zn(2+)-binding site is contributed by His-134. 2 helical membrane passes run 145-165 and 173-193; these read ITATLAGAISMLGNFAFFFGG and PLGFVGVIVAMIVAPLAAMLV. Zn(2+) is bound at residue Glu-202. Residues 283-320 are disordered; the sequence is MNVSTSPARAANPSRKSRSVPDTGLGRGGSQPPKGPWS.

It belongs to the peptidase M48B family. Requires Zn(2+) as cofactor.

It is found in the cell inner membrane. This Rhizobium johnstonii (strain DSM 114642 / LMG 32736 / 3841) (Rhizobium leguminosarum bv. viciae) protein is Protease HtpX homolog.